The primary structure comprises 1368 residues: Inactive tyrosine-protein kinase PRAG1 (1368 aa).

A disordered region spans residues 200-236 (CLKGPRPCTSPQPLRESLPSEDDSDQRCSPSGDSEGG). At Y238 the chain carries Phosphotyrosine; by CSK. The interval 297–330 (STANPPHLGPKKPSLNSEAASSSDGLSCGSSRSG) is disordered. Low complexity predominate over residues 317–330 (SSSDGLSCGSSRSG). Phosphotyrosine; by CSK occurs at positions 343 and 391. 3 disordered regions span residues 392–443 (AESA…PNAA), 499–605 (LSSR…GAWS), and 636–792 (HSNS…KKIV). Positions 414 to 434 (VSSGQVWTGDTWSQKTPSGWS) are enriched in polar residues. Positions 502–518 (RESHPHNMTENSSKEKP) are enriched in basic and acidic residues. 2 stretches are compositionally biased toward low complexity: residues 522-535 (PKLS…SPVS) and 550-563 (SGSS…SRVP). Composition is skewed to polar residues over residues 564-574 (TNLTSSCQTNG) and 652-666 (SGQN…SKSA). A phosphoserine mark is found at S667 and S716. 2 stretches are compositionally biased toward polar residues: residues 707-717 (VSQSSAESLSP) and 725-741 (SFTT…SRTC). Phosphoserine occurs at positions 753 and 797. 2 disordered regions span residues 799–818 (PDGF…SPKL) and 873–901 (NSKG…VSSQ). The span at 887-901 (AATSTSSSQLSVSSQ) shows a compositional bias: low complexity. Residues 906–949 (SSQLQLHSLLSSISSKEGTYAKLGGLYTQSLARLVTKCEDLFMG) are required for homodimerization. A Protein kinase domain is found at 940–1291 (VTKCEDLFMG…EAKRVLQCLL (352 aa)). A compositionally biased stretch (polar residues) spans 1134–1144 (SSPGPSANPSV). The segment at 1134–1166 (SSPGPSANPSVPTTTSRCPSAAPAATTACQGGP) is disordered. A compositionally biased stretch (low complexity) spans 1145-1162 (PTTTSRCPSAAPAATTAC). Residues 1293–1368 (GPRRELVEQP…LQSLKLLQLL (76 aa)) are required for homodimerization.

The protein belongs to the protein kinase superfamily. In terms of assembly, homodimer. Dimerization leads to the catalytic activation of CSK. Interacts (via C-terminus) with RND2. Interacts with CSK (via SH2 domain) in a Tyr-391 phosphorylation-dependent manner; this interaction potentiates kinase activity of CSK. Interacts with NOTCH1 intracellular domain (N1ICD). Forms a complex with N1ICD and MAML1, in a MAML1-dependent manner. Phosphorylated by CSK on Tyr-238, Tyr-343, and Tyr-391; Tyr-391 is a primary site of phosphorylation. In terms of tissue distribution, highly-expressed in brain, including cortical and hippocampal pyramidal neurons, as well as in kidney, spleen, colon and small intestine.

Its subcellular location is the cytoplasm. It localises to the nucleus. It is found in the cell junction. The protein localises to the focal adhesion. Functionally, catalytically inactive protein kinase that acts as a scaffold protein. Functions as an effector of the small GTPase RND2, which stimulates RhoA activity and inhibits NGF-induced neurite outgrowth. Promotes Src family kinase (SFK) signallig by regulating the subcellular localization of CSK, a negative regulator of these kinases, leading to the regulation of cell morphology and motility by a CSK-dependent mechanism. Acts as a critical coactivator of Notch signaling. The sequence is that of Inactive tyrosine-protein kinase PRAG1 from Rattus norvegicus (Rat).